Consider the following 1013-residue polypeptide: Prominin-like protein (1013 aa).

A helical membrane pass occupies residues 32–52 (IAYLAICGLSVAIFGFALATL). N99 and N116 each carry an N-linked (GlcNAc...) asparagine glycan. A run of 3 helical transmembrane segments spans residues 215–235 (CGIC…IAFV), 489–509 (VVSL…IFAL), and 535–555 (LLLA…VGLF). Residues N576, N618, N803, and N824 are each glycosylated (N-linked (GlcNAc...) asparagine). The chain crosses the membrane as a helical span at residues 852–872 (INGFWVGILLCALLFLPILFV). The disordered stretch occupies residues 918-1013 (ANVPKKRRKA…YYYPGASEQD (96 aa)). N-linked (GlcNAc...) asparagine glycosylation occurs at N949. Over residues 950–963 (RSGGDRGGGGGDGA) the composition is skewed to gly residues.

This sequence belongs to the prominin family.

Its subcellular location is the membrane. In Drosophila melanogaster (Fruit fly), this protein is Prominin-like protein.